The chain runs to 557 residues: MSEVPEELKIKQKFPNWYDWLKPITQKDIKHGFASYIALPKQVNSEFFKMPFGDVERDVFSEDWKLPENWKEIILDSFKETLEKNRAFKVFMDICVRCGACADKCHYYIGTGDPKNMPVMRAETVRSVYRYYFTIGGKLFGKWAGARPLDENVIKEWYYYLLQCSLCRRCSLFCPYGIDTAEVVWWARRMLSRVGLNQRFMCISIEASARTGNHLGLYAGGMAGSIEQGLSELKDITGFDLHTYINKPGADVLFVAPSADYFATPHWYAMLGYLLLFNELEERYGLTVTWSTYASEGGNFGTFHSYEAAQLLNSKIYKEAERLGVKFIIGGECGHMWRDKHQFINTMNNPPKHAEWKKFWDDPDLGQISEKLKGINLGEFISGEHGWIHVLEFVAALIKHKKIDIDPSRNDHWRATYHDPCNVARGMGMLEEPRYVLRNVMNNFYDMPEHTIREKTYCCAAGGGMLAEELMELRMRGVMPRMMALRYVVKKYGVNIMLTPCAIDKAQFPIAVDYWKIPVEIGGPMEMVGNALVLTAFGEKPEDRKYDLRGTPIREEE.

4Fe-4S ferredoxin-type domains are found at residues 86–115 (RAFK…GDPK) and 155–184 (KEWY…AEVV). Cys-95, Cys-98, Cys-101, Cys-105, Cys-164, Cys-167, Cys-170, and Cys-174 together coordinate [4Fe-4S] cluster.

[4Fe-4S] cluster serves as cofactor.

Its subcellular location is the membrane. Functionally, has menaquinol-oxidizing activity. The HmeC and HmeD subunits may together mediate electron transfer from menaquinol to an unidentified electron acceptor on the cytoplasmic side of the membrane. The chain is Hdr-like menaquinol oxidoreductase iron-sulfur subunit (hmeD) from Archaeoglobus profundus (strain DSM 5631 / JCM 9629 / NBRC 100127 / Av18).